The primary structure comprises 193 residues: Potassium-transporting ATPase KdpC subunit (193 aa).

A helical transmembrane segment spans residues 7–27; that stretch reads PALVLFAALTLLTGVAYPLAV.

Belongs to the KdpC family. As to quaternary structure, the system is composed of three essential subunits: KdpA, KdpB and KdpC.

The protein resides in the cell inner membrane. Part of the high-affinity ATP-driven potassium transport (or Kdp) system, which catalyzes the hydrolysis of ATP coupled with the electrogenic transport of potassium into the cytoplasm. This subunit acts as a catalytic chaperone that increases the ATP-binding affinity of the ATP-hydrolyzing subunit KdpB by the formation of a transient KdpB/KdpC/ATP ternary complex. The sequence is that of Potassium-transporting ATPase KdpC subunit from Rhodospirillum rubrum (strain ATCC 11170 / ATH 1.1.1 / DSM 467 / LMG 4362 / NCIMB 8255 / S1).